The following is a 270-amino-acid chain: Allergen Asp f 7 (270 aa).

The signal sequence occupies residues 1-21 (MAPIFKSLALVSALFAAISSA). Disordered stretches follow at residues 53-97 (YPTP…QPTQ) and 113-167 (ADSA…GPCS). The span at 63–81 (VVESTPTPTPSAAPEQAEP) shows a compositional bias: low complexity. Over residues 83–97 (ETSTQPETTKSQPTQ) the composition is skewed to polar residues. Low complexity predominate over residues 127–149 (PATTAAPSTSTTTQAAPSAPPAA). A compositionally biased stretch (polar residues) spans 150-162 (NSGSTEKAASSGY).

This chain is Allergen Asp f 7, found in Aspergillus fumigatus (strain ATCC MYA-4609 / CBS 101355 / FGSC A1100 / Af293) (Neosartorya fumigata).